The following is a 102-amino-acid chain: NADH-quinone oxidoreductase subunit K (102 aa).

Transmembrane regions (helical) follow at residues 6–26, 30–50, and 64–84; these read MHHG…GILV, LIFI…AFVV, and FIFI…LLLL.

Belongs to the complex I subunit 4L family. NDH-1 is composed of 14 different subunits. Subunits NuoA, H, J, K, L, M, N constitute the membrane sector of the complex.

Its subcellular location is the cell inner membrane. The enzyme catalyses a quinone + NADH + 5 H(+)(in) = a quinol + NAD(+) + 4 H(+)(out). In terms of biological role, NDH-1 shuttles electrons from NADH, via FMN and iron-sulfur (Fe-S) centers, to quinones in the respiratory chain. The immediate electron acceptor for the enzyme in this species is believed to be ubiquinone. Couples the redox reaction to proton translocation (for every two electrons transferred, four hydrogen ions are translocated across the cytoplasmic membrane), and thus conserves the redox energy in a proton gradient. In Nitrosospira multiformis (strain ATCC 25196 / NCIMB 11849 / C 71), this protein is NADH-quinone oxidoreductase subunit K.